The primary structure comprises 465 residues: Mothers against decapentaplegic homolog 5 (465 aa).

Positions 13 to 137 (PAVKRLLGWK…YKRVESPVLP (125 aa)) constitute an MH1 domain. Zn(2+)-binding residues include C65, C110, C122, and H127. The segment at 163-242 (NEPHMPHNAT…MGQDNSQSMD (80 aa)) is disordered. The span at 173–183 (FPDSFQQPNST) shows a compositional bias: polar residues. Residues 198–214 (ASSTYPSSPASSGPSSP) are compositionally biased toward low complexity. The MH2 domain occupies 271 to 465 (WCSIVYYELN…SPLNPISSVS (195 aa)).

Belongs to the dwarfin/SMAD family. May form trimers with the co-SMAD SMAD4.

It localises to the cytoplasm. Its subcellular location is the nucleus. Transcriptional modulator activated by BMP (bone morphogenetic proteins) type 1 receptor kinase. SMAD5 is a receptor-regulated SMAD (R-SMAD). This is Mothers against decapentaplegic homolog 5 (SMAD5) from Gallus gallus (Chicken).